The chain runs to 356 residues: Probable dual-specificity RNA methyltransferase RlmN (356 aa).

The active-site Proton acceptor is the E92. The Radical SAM core domain maps to 98–336; the sequence is HKYGFSVCVT…CGVRLEHGTD (239 aa). The cysteines at positions 105 and 341 are disulfide-linked. Positions 112, 116, and 119 each coordinate [4Fe-4S] cluster. S-adenosyl-L-methionine-binding positions include 164–165, S196, 219–221, and N297; these read GE and SLH. C341 acts as the S-methylcysteine intermediate in catalysis.

It belongs to the radical SAM superfamily. RlmN family. The cofactor is [4Fe-4S] cluster.

It is found in the cytoplasm. It catalyses the reaction adenosine(2503) in 23S rRNA + 2 reduced [2Fe-2S]-[ferredoxin] + 2 S-adenosyl-L-methionine = 2-methyladenosine(2503) in 23S rRNA + 5'-deoxyadenosine + L-methionine + 2 oxidized [2Fe-2S]-[ferredoxin] + S-adenosyl-L-homocysteine. The catalysed reaction is adenosine(37) in tRNA + 2 reduced [2Fe-2S]-[ferredoxin] + 2 S-adenosyl-L-methionine = 2-methyladenosine(37) in tRNA + 5'-deoxyadenosine + L-methionine + 2 oxidized [2Fe-2S]-[ferredoxin] + S-adenosyl-L-homocysteine. Its function is as follows. Specifically methylates position 2 of adenine 2503 in 23S rRNA and position 2 of adenine 37 in tRNAs. The sequence is that of Probable dual-specificity RNA methyltransferase RlmN from Shouchella clausii (strain KSM-K16) (Alkalihalobacillus clausii).